The following is a 453-amino-acid chain: Serine incorporator 1 (453 aa).

Residue Gly2 is the site of N-myristoyl glycine attachment. At 2–39 (GSVLGLCSMASWIPCLCGSAPCLLCRCCPSGNNSTVTR) the chain is on the cytoplasmic side. The helical transmembrane segment at 40 to 60 (LIYALFLLVGVCVACVMLIPG) threads the bilayer. Topologically, residues 61–88 (MEEQLNKIPGFCENEKGVVPCNILVGYK) are lumenal. Residues 89-109 (AVYRLCFGLAMFYLLLSLLMI) form a helical membrane-spanning segment. Residues 110-123 (KVKSSSDPRAAVHN) are Cytoplasmic-facing. The chain crosses the membrane as a helical span at residues 124-144 (GFWFFKFAAAIAIIIGAFFIP). The Lumenal portion of the chain corresponds to 145–151 (EGTFTTV). A helical membrane pass occupies residues 152–172 (WFYVGMAGAFCFILIQLVLLI). Residues 173 to 197 (DFAHSWNESWVEKMEEGNSRCWYAA) are Cytoplasmic-facing. A helical membrane pass occupies residues 198–218 (LLSATALNYLLSLVAIVLFFV). Residues 219–231 (YYTHPASCSENKA) are Lumenal-facing. The chain crosses the membrane as a helical span at residues 232–252 (FISVNMLLCIGASVMSILPKI). The Cytoplasmic segment spans residues 253-259 (QESQPRS). The helical transmembrane segment at 260–280 (GLLQSSVITVYTMYLTWSAMT) threads the bilayer. Over 281 to 309 (NEPETNCNPSLLSIIGYNTTSTVPKEGQS) the chain is Lumenal. Residues 310-330 (VQWWHAQGIIGLILFLLCVFY) form a helical membrane-spanning segment. Residues 331–387 (SSIRTSNNSQVNKLTLTSDESTLIEDGGARSDGSLEDGDDVHRAVDNERDGVTYSYS) lie on the Cytoplasmic side of the membrane. Ser351 carries the post-translational modification Phosphoserine. Thr352 carries the post-translational modification Phosphothreonine. Residues Ser361 and Ser364 each carry the phosphoserine modification. The chain crosses the membrane as a helical span at residues 388-408 (FFHFMLFLASLYIMMTLTNWY). Topologically, residues 409 to 426 (RYEPSREMKSQWTAVWVK) are lumenal. The helical transmembrane segment at 427–447 (ISSSWIGIVLYVWTLVAPLVL) threads the bilayer. At 448–453 (TNRDFD) the chain is on the cytoplasmic side.

It belongs to the TDE1 family. In terms of assembly, interacts with SPTLC1.

It localises to the endoplasmic reticulum membrane. Functionally, enhances the incorporation of serine into phosphatidylserine and sphingolipids. This Pongo abelii (Sumatran orangutan) protein is Serine incorporator 1 (SERINC1).